A 150-amino-acid polypeptide reads, in one-letter code: UPF0506 protein SJCHGC02381 (150 aa).

Positions 1–18 (MNTCIQLLILCLVTVINS) are cleaved as a signal peptide. Residues Asn20, Asn24, Asn32, Asn36, Asn48, Asn52, Asn64, and Asn110 are each glycosylated (N-linked (GlcNAc...) asparagine). Residues 22-49 (TDNSTENTIKNETENATETELPETFENE) are disordered. Acidic residues predominate over residues 36–49 (NATETELPETFENE). 3 cysteine pairs are disulfide-bonded: Cys116-Cys130, Cys123-Cys134, and Cys129-Cys139.

It belongs to the UPF0506 family.

The protein localises to the secreted. The sequence is that of UPF0506 protein SJCHGC02381 from Schistosoma japonicum (Blood fluke).